Reading from the N-terminus, the 147-residue chain is Large ribosomal subunit protein uL13 (147 aa).

It belongs to the universal ribosomal protein uL13 family. In terms of assembly, part of the 50S ribosomal subunit.

This protein is one of the early assembly proteins of the 50S ribosomal subunit, although it is not seen to bind rRNA by itself. It is important during the early stages of 50S assembly. This Lactobacillus johnsonii (strain CNCM I-12250 / La1 / NCC 533) protein is Large ribosomal subunit protein uL13.